The sequence spans 95 residues: MSESNVTEETKAARGFRKTRQGLVVSDKMDKTVVVAVEDRVTHALYGKVIRRTEKLKAHDEQNAAGVGDRVLLMETRPLSATKRWRVVEVLEKAK.

Belongs to the universal ribosomal protein uS17 family. Part of the 30S ribosomal subunit.

In terms of biological role, one of the primary rRNA binding proteins, it binds specifically to the 5'-end of 16S ribosomal RNA. This Streptomyces coelicolor (strain ATCC BAA-471 / A3(2) / M145) protein is Small ribosomal subunit protein uS17.